The primary structure comprises 190 residues: dITP/XTP pyrophosphatase (190 aa).

10 to 15 provides a ligand contact to substrate; the sequence is TTNKHK. The Mg(2+) site is built by Glu39 and Asp68. Asp68 (proton acceptor) is an active-site residue. Residues Ala69, 143–146, Lys166, and 171–172 contribute to the substrate site; these read FGYD and HR.

This sequence belongs to the HAM1 NTPase family. As to quaternary structure, homodimer. Mg(2+) serves as cofactor.

It carries out the reaction XTP + H2O = XMP + diphosphate + H(+). The catalysed reaction is dITP + H2O = dIMP + diphosphate + H(+). The enzyme catalyses ITP + H2O = IMP + diphosphate + H(+). In terms of biological role, pyrophosphatase that catalyzes the hydrolysis of nucleoside triphosphates to their monophosphate derivatives, with a high preference for the non-canonical purine nucleotides XTP (xanthosine triphosphate), dITP (deoxyinosine triphosphate) and ITP. Seems to function as a house-cleaning enzyme that removes non-canonical purine nucleotides from the nucleotide pool, thus preventing their incorporation into DNA/RNA and avoiding chromosomal lesions. The sequence is that of dITP/XTP pyrophosphatase from Hyperthermus butylicus (strain DSM 5456 / JCM 9403 / PLM1-5).